Here is a 453-residue protein sequence, read N- to C-terminus: Nuclear distribution protein nudF-2 (453 aa).

Residues 9 to 41 (QADELHRALIAYLTAANLPNTAAALREELNLSE) enclose the LisH domain. Residues 62-88 (SVVRLQKKIMDLESRNHILQSELDNAT) are a coiled coil. Residues 84-107 (LDNATPTSRQNKDPVAWLPRAPPR) form a disordered region. WD repeat units follow at residues 112 to 153 (SHRD…RTIK), 155 to 195 (HTKA…KNIR), 199 to 239 (GHDH…CVKT), 242 to 281 (GHAEWVRDVCPSLDGKYILSTSDDYTSRLWDVTITNPEPK), 286 to 345 (GHEH…IKTL), 347 to 386 (GHDNWVRGLVFHPGGKYLLSVSDDKTLRCWDLTQEGKCVK), and 391 to 449 (AHGH…LNVR).

Belongs to the WD repeat LIS1/nudF family. Self-associates. Interacts with ro-11/nde1 and dynein.

It is found in the cytoplasm. The protein localises to the cytoskeleton. Its subcellular location is the spindle pole. Positively regulates the activity of the minus-end directed microtubule motor protein dynein. May enhance dynein-mediated microtubule sliding by targeting dynein to the microtubule plus end. Required for nuclear migration during vegetative growth as well as development. Required for retrograde early endosome (EE) transport from the hyphal tip. Required for localization of dynein to the mitotic spindle poles. Recruits additional proteins to the dynein complex at SPBs. This chain is Nuclear distribution protein nudF-2 (nmp-1), found in Neurospora crassa (strain ATCC 24698 / 74-OR23-1A / CBS 708.71 / DSM 1257 / FGSC 987).